The sequence spans 335 residues: Pharynx and intestine in excess protein 1 (335 aa).

Lys-68 is covalently cross-linked (Glycyl lysine isopeptide (Lys-Gly) (interchain with G-Cter in SUMO)). A C3H1-type 1 zinc finger spans residues 98–126 (EYKTRLCDAFRREGYCPYNDNCTYAHGQD). The segment covering 130-156 (VPRRRQEYYSRDPPRERRDSRSRRDDV) has biased composition (basic and acidic residues). The segment at 130–188 (VPRRRQEYYSRDPPRERRDSRSRRDDVDTTINRSSSSASKHHDENRRPSNNHGSSNRRQ) is disordered. Composition is skewed to polar residues over residues 158-167 (TTINRSSSSA) and 177-187 (PSNNHGSSNRR). A C3H1-type 2 zinc finger spans residues 184 to 211 (SNRRQICHNFERGNCRYGPRCRFIHVEQ). Residues 288 to 291 (MAPT) form a required for inhibition of Ser-2 phosphorylation region.

As to quaternary structure, interacts with hda-1, let-418 and mep-1. Interacts (via C terminus) with cit-1.1 (via C terminus). Sumoylated in adult germ cells.

Its subcellular location is the nucleus. It is found in the cytoplasm. It localises to the cytoskeleton. The protein resides in the microtubule organizing center. The protein localises to the centrosome. Its subcellular location is the spindle. It is found in the cytoplasmic granule. In terms of biological role, maternally provided pie-1 is required for germline cell fate determination. Functions as a repressor of RNA polymerase II-dependent gene expression in the developing germline. Required for expression of nos-2 in P4 germline blastomere cells. Inhibits the histone deacetylase activity of hda-1. Represses transcriptional activation of cdk-9 and cit-1.1, which are members of the P-TEFb complex. Acts redundantly with gei-17 to promote piRNA-mediated silencing and fertility in adult germline. Promotes the sumoylation of hda-1 in adult animals but not in embryos thereby regulating its interaction with mep-1. This chain is Pharynx and intestine in excess protein 1, found in Caenorhabditis elegans.